The primary structure comprises 785 residues: Transcription factor Sp1 (785 aa).

The interval 1-93 (MSDQDHSMDE…PSQSGGTGEL (93 aa)) is disordered. Ser2 carries the N-acetylserine modification. Phosphoserine occurs at positions 2 and 7. The segment at 2-82 (SDQDHSMDEM…SPNENSNNSQ (81 aa)) is repressor domain. Lys16 is covalently cross-linked (Glycyl lysine isopeptide (Lys-Gly) (interchain with G-Cter in SUMO); alternate). Residue Lys16 forms a Glycyl lysine isopeptide (Lys-Gly) (interchain with G-Cter in SUMO2); alternate linkage. Over residues 20–34 (GVGGNNGGNGNGGGA) the composition is skewed to gly residues. Ser59 carries the post-translational modification Phosphoserine. Low complexity predominate over residues 72–85 (ESPNENSNNSQGPS). Ser101 bears the Phosphoserine; by ATM mark. Polar residues predominate over residues 109–123 (IISSSSGATPTSKEQ). The interval 109–141 (IISSSSGATPTSKEQSGSSTNGSNGSESSKNRT) is disordered. Residues 124–136 (SGSSTNGSNGSES) are compositionally biased toward low complexity. The tract at residues 146–251 (QYVVAAAPNL…ANNVLSGQTQ (106 aa)) is transactivation domain A (Gln-rich). The interval 261–495 (NGNITLLPVN…PMQGVSLGQT (235 aa)) is transactivation domain B (Gln-rich). Thr278 carries the phosphothreonine; by MAPK8 modification. Positions 329–395 (TTTTTSNMGI…KEGEQNQQTQ (67 aa)) are disordered. Low complexity predominate over residues 342 to 357 (TTSGSSGTNSQGQTPQ). Residues 358–379 (RVSGLQGSDALNIQQNQTSGGS) are compositionally biased toward polar residues. A compositionally biased stretch (low complexity) spans 381–395 (QAGQQKEGEQNQQTQ). Thr453 carries the post-translational modification Phosphothreonine; by MAPK1 and MAPK3. The 9aaTAD signature appears at 462-470 (VSWQTLQLQ). A glycan (O-linked (GlcNAc) serine) is linked at Ser491. The tract at residues 496–610 (SSSNTTLTPI…REACTCPYCK (115 aa)) is transactivation domain C (highly charged). The segment at 567–598 (LHGAGGDGIHDDTAGGEEGENSPDAQPQAGRR) is disordered. Ser612 is modified (phosphoserine; alternate). A glycan (O-linked (GlcNAc) serine; alternate) is linked at Ser612. Positions 619-785 (DPGKKKQHIC…QSINISGNGF (167 aa)) are VZV IE62-binding. Residues 626–650 (HICHIQGCGKVYGKTSHLRAHLRWH) form a C2H2-type 1 zinc finger. At Thr640 the chain carries Phosphothreonine; alternate. Thr640 carries an O-linked (GlcNAc) threonine; alternate glycan. Ser641 carries O-linked (GlcNAc) serine; alternate glycosylation. Ser641 is subject to Phosphoserine; by PKC/PRKCZ; alternate. Thr651 carries the phosphothreonine; by PKC/PRKCZ modification. A C2H2-type 2 zinc finger spans residues 656 to 680 (FMCTWSYCGKRFTRSDELQRHKRTH). Thr668 is modified (phosphothreonine). Ser670 is modified (phosphoserine; by PKC/PRKCZ). Thr681 bears the Phosphothreonine; by PKC/PRKCZ mark. The C2H2-type 3 zinc finger occupies 686 to 708 (FACPECPKRFMRSDHLSKHIKTH). Ser698 and Ser702 each carry phosphoserine; alternate. O-linked (GlcNAc) serine; alternate glycans are attached at residues Ser698 and Ser702. An N6-acetyllysine modification is found at Lys703. The tract at residues 708-785 (HQNKKGGPGV…QSINISGNGF (78 aa)) is domain D. The residue at position 739 (Thr739) is a Phosphothreonine; by MAPK1, MAPK3 and MAPK8.

It belongs to the Sp1 C2H2-type zinc-finger protein family. As to quaternary structure, interacts with ATF7IP, ATF7IP2, BAHD1, POGZ, HCFC1, AATF and PHC2. Interacts with HLTF; the interaction may be required for basal transcriptional activity of HLTF. Interacts (deacetylated form) with EP300; the interaction enhances gene expression. Interacts with HDAC1 and JUN. Interacts with ELF1; the interaction is inhibited by glycosylation of SP1. Interaction with NFYA; the interaction is inhibited by glycosylation of SP1. Interacts with ATF7IP and TBP. Interacts with MEIS2 isoform 4 and PBX1 isoform PBX1a. Interacts with EGR1. Interacts with SMARCA4/BRG1. Interacts with RNF112 in an oxidative stress-regulated manner. Interacts with ZBTB7A; ZBTB7A prevents the binding to GC-rich motifs in promoters and represses the transcriptional activity of SP1. Interacts with DDX3X; this interaction potentiates SP1-induced CDKN1A/WAF1/CIP1 transcription. Interacts with MSX1; the interaction may inhibit MSX1 autoinactivation. (Microbial infection) Interacts with varicella-zoster virus IE62 protein. In terms of assembly, (Microbial infection) Interacts with SV40 VP2/3 proteins. Interacts with SV40 major capsid protein VP1; this interaction leads to a cooperativity between the 2 proteins in DNA binding. As to quaternary structure, (Microbial infection) Interacts with HIV-1 Vpr; the interaction is inhibited by SP1 O-glycosylation. Phosphorylated on multiple serine and threonine residues. Phosphorylation is coupled to ubiquitination, sumoylation and proteolytic processing. Phosphorylation on Ser-59 enhances proteolytic cleavage. Phosphorylation on Ser-7 enhances ubiquitination and protein degradation. Hyperphosphorylation on Ser-101 in response to DNA damage has no effect on transcriptional activity. MAPK1/MAPK3-mediated phosphorylation on Thr-453 and Thr-739 enhances VEGF transcription but, represses FGF2-triggered PDGFR-alpha transcription. Also implicated in the repression of RECK by ERBB2. Hyperphosphorylated on Thr-278 and Thr-739 during mitosis by MAPK8 shielding SP1 from degradation by the ubiquitin-dependent pathway. Phosphorylated in the zinc-finger domain by calmodulin-activated PKCzeta. Phosphorylation on Ser-641 by PKCzeta is critical for TSA-activated LHR gene expression through release of its repressor, p107. Phosphorylation on Thr-668, Ser-670 and Thr-681 is stimulated by angiotensin II via the AT1 receptor inducing increased binding to the PDGF-D promoter. This phosphorylation is increased in injured artey wall. Ser-59 and Thr-681 can both be dephosphorylated by PP2A during cell-cycle interphase. Dephosphorylation on Ser-59 leads to increased chromatin association during interphase and increases the transcriptional activity. On insulin stimulation, sequentially glycosylated and phosphorylated on several C-terminal serine and threonine residues. In terms of processing, acetylated. Acetylation/deacetylation events affect transcriptional activity. Deacetylation leads to an increase in the expression of the 12(s)-lipooxygenase gene through recruitment of p300 to the promoter. Deacetylated by HDAC6 which leads to increased expression of ENG and positive regulation of angiogenesis. Post-translationally, ubiquitinated. Ubiquitination occurs on the C-terminal proteolytically-cleaved peptide and is triggered by phosphorylation. Sumoylated with SUMO1. Sumoylation modulates proteolytic cleavage of the N-terminal repressor domain. Sumoylation levels are attenuated during tumorigenesis. Phosphorylation mediates SP1 desumoylation. In terms of processing, proteolytic cleavage in the N-terminal repressor domain is prevented by sumoylation. The C-terminal cleaved product is susceptible to degradation. Post-translationally, O-glycosylated; Contains 8 N-acetylglucosamine side chains. Levels are controlled by insulin and the SP1 phosphorylation states. Insulin-mediated O-glycosylation locates SP1 to the nucleus, where it is sequentially deglycosylated and phosphorylated. O-glycosylation affects transcriptional activity through disrupting the interaction with a number of transcription factors including ELF1 and NFYA. Also inhibits interaction with the HIV1 promoter. Inhibited by peroxisomome proliferator receptor gamma (PPARgamma). In terms of tissue distribution, up-regulated in adenocarcinomas of the stomach (at protein level). Isoform 3 is ubiquitously expressed at low levels.

It localises to the nucleus. The protein localises to the cytoplasm. In terms of biological role, transcription factor that can activate or repress transcription in response to physiological and pathological stimuli. Binds with high affinity to GC-rich motifs and regulates the expression of a large number of genes involved in a variety of processes such as cell growth, apoptosis, differentiation and immune responses. Highly regulated by post-translational modifications (phosphorylations, sumoylation, proteolytic cleavage, glycosylation and acetylation). Also binds the PDGFR-alpha G-box promoter. May have a role in modulating the cellular response to DNA damage. Implicated in chromatin remodeling. Plays an essential role in the regulation of FE65 gene expression. In complex with ATF7IP, maintains telomerase activity in cancer cells by inducing TERT and TERC gene expression. Isoform 3 is a stronger activator of transcription than isoform 1. Positively regulates the transcription of the core clock component BMAL1. Plays a role in the recruitment of SMARCA4/BRG1 on the c-FOS promoter. Plays a role in protecting cells against oxidative stress following brain injury by regulating the expression of RNF112. In Homo sapiens (Human), this protein is Transcription factor Sp1 (SP1).